A 230-amino-acid polypeptide reads, in one-letter code: Ion-translocating oxidoreductase complex subunit E (230 aa).

The next 6 membrane-spanning stretches (helical) occupy residues 18-38 (ALVQLLGMCPLLAVTSTATNA), 39-59 (LGLGLATTLVLTLTNLTISTL), 63-83 (TPTEIRIPIYVMIIASVVSAV), 86-106 (LINAYAFGLYQSLGIFIPLIV), 128-148 (ALDGFAIGMGATGAMFVLGAM), and 182-202 (PFLLAMLPPGAFIGLGLMLAG).

The protein belongs to the NqrDE/RnfAE family. In terms of assembly, the complex is composed of six subunits: RsxA, RsxB, RsxC, RsxD, RsxE and RsxG.

The protein localises to the cell inner membrane. In terms of biological role, part of a membrane-bound complex that couples electron transfer with translocation of ions across the membrane. Required to maintain the reduced state of SoxR. The polypeptide is Ion-translocating oxidoreductase complex subunit E (Escherichia fergusonii (strain ATCC 35469 / DSM 13698 / CCUG 18766 / IAM 14443 / JCM 21226 / LMG 7866 / NBRC 102419 / NCTC 12128 / CDC 0568-73)).